A 642-amino-acid polypeptide reads, in one-letter code: 3D-(3,5/4)-trihydroxycyclohexane-1,2-dione hydrolase (642 aa).

Glu71 serves as a coordination point for thiamine diphosphate. The interval 446 to 526 (SLPGDVQRIW…INILVFDNSG (81 aa)) is thiamine pyrophosphate binding. Positions 497 and 524 each coordinate Mg(2+).

Belongs to the TPP enzyme family. The cofactor is Mg(2+). Requires thiamine diphosphate as cofactor.

It catalyses the reaction 3D-3,5/4-trihydroxycyclohexane-1,2-dione + H2O = 5-deoxy-D-glucuronate + H(+). The protein operates within polyol metabolism; myo-inositol degradation into acetyl-CoA; acetyl-CoA from myo-inositol: step 3/7. Functionally, involved in the cleavage of the C1-C2 bond of 3D-(3,5/4)-trihydroxycyclohexane-1,2-dione (THcHDO) to yield 5-deoxy-glucuronate (5DG). In Lacticaseibacillus casei (Lactobacillus casei), this protein is 3D-(3,5/4)-trihydroxycyclohexane-1,2-dione hydrolase.